Consider the following 605-residue polypeptide: Poly(3-hydroxyalkanoate) polymerase (605 aa).

An AB hydrolase-1 domain is found at 319–527 (IETAIDMIGV…VLAGSGHIAG (209 aa)). Cys-341 is a catalytic residue.

This sequence belongs to the PHA/PHB synthase family.

It is found in the cytoplasm. This Methylorubrum extorquens (Methylobacterium dichloromethanicum) protein is Poly(3-hydroxyalkanoate) polymerase (phaC).